The sequence spans 119 residues: Large ribosomal subunit protein bL19 (119 aa).

It belongs to the bacterial ribosomal protein bL19 family.

Functionally, this protein is located at the 30S-50S ribosomal subunit interface and may play a role in the structure and function of the aminoacyl-tRNA binding site. This chain is Large ribosomal subunit protein bL19, found in Leuconostoc mesenteroides subsp. mesenteroides (strain ATCC 8293 / DSM 20343 / BCRC 11652 / CCM 1803 / JCM 6124 / NCDO 523 / NBRC 100496 / NCIMB 8023 / NCTC 12954 / NRRL B-1118 / 37Y).